The primary structure comprises 409 residues: Elongation factor Tu (409 aa).

One can recognise a tr-type G domain in the interval 10–214 (KPHLNIGTIG…AVDSFIPTPE (205 aa)). The G1 stretch occupies residues 19 to 26 (GHVDHGKT). 19-26 (GHVDHGKT) is a GTP binding site. Threonine 26 contributes to the Mg(2+) binding site. Positions 60–64 (GITIN) are G2. Positions 81–84 (DCPG) are G3. Residues 81–85 (DCPGH) and 136–139 (NKED) each bind GTP. The tract at residues 136–139 (NKED) is G4. The tract at residues 174–176 (SGL) is G5.

It belongs to the TRAFAC class translation factor GTPase superfamily. Classic translation factor GTPase family. EF-Tu/EF-1A subfamily. As to quaternary structure, monomer.

It localises to the cytoplasm. The catalysed reaction is GTP + H2O = GDP + phosphate + H(+). In terms of biological role, GTP hydrolase that promotes the GTP-dependent binding of aminoacyl-tRNA to the A-site of ribosomes during protein biosynthesis. This is Elongation factor Tu from Nostoc punctiforme (strain ATCC 29133 / PCC 73102).